Reading from the N-terminus, the 89-residue chain is Putative defensin-like protein 40 (89 aa).

An N-terminal signal peptide occupies residues 1 to 26 (MAGIANGVGLLISFMLICGGMPKGHA). 4 disulfide bridges follow: Cys-33–Cys-88, Cys-46–Cys-69, Cys-55–Cys-81, and Cys-59–Cys-83.

This sequence belongs to the DEFL family.

It is found in the secreted. The protein is Putative defensin-like protein 40 of Arabidopsis thaliana (Mouse-ear cress).